A 941-amino-acid polypeptide reads, in one-letter code: Isoleucine--tRNA ligase (941 aa).

A 'HIGH' region motif is present at residues 58–68 (PYANGDIHIGH). Glu563 is a binding site for L-isoleucyl-5'-AMP. Positions 604 to 608 (KMSKS) match the 'KMSKS' region motif. Residue Lys607 participates in ATP binding. Cys904, Cys907, Cys924, and Cys927 together coordinate Zn(2+).

This sequence belongs to the class-I aminoacyl-tRNA synthetase family. IleS type 1 subfamily. As to quaternary structure, monomer. The cofactor is Zn(2+).

It is found in the cytoplasm. The enzyme catalyses tRNA(Ile) + L-isoleucine + ATP = L-isoleucyl-tRNA(Ile) + AMP + diphosphate. Its function is as follows. Catalyzes the attachment of isoleucine to tRNA(Ile). As IleRS can inadvertently accommodate and process structurally similar amino acids such as valine, to avoid such errors it has two additional distinct tRNA(Ile)-dependent editing activities. One activity is designated as 'pretransfer' editing and involves the hydrolysis of activated Val-AMP. The other activity is designated 'posttransfer' editing and involves deacylation of mischarged Val-tRNA(Ile). The polypeptide is Isoleucine--tRNA ligase (Halorhodospira halophila (strain DSM 244 / SL1) (Ectothiorhodospira halophila (strain DSM 244 / SL1))).